The chain runs to 219 residues: Claudin-20 (219 aa).

Over 1–7 the chain is Cytoplasmic; the sequence is MASAGLQ. Residues 8 to 28 form a helical membrane-spanning segment; that stretch reads LLAFILALSGVSGVLTATLLP. Residues 29–81 lie on the Extracellular side of the membrane; it reads NWKVNVDVDSNIITAIVQLHGLWMDCTWYSTGMFSCALKHSILSLPIHVQAAR. The helical transmembrane segment at 82 to 102 threads the bilayer; it reads ATMVLACVLSALGICTSTVGM. Over 103 to 118 the chain is Cytoplasmic; sequence KCTRLGGDRETKSHAS. Residues 119-139 form a helical membrane-spanning segment; it reads FAGGVCFMSAGISSLISTVWY. Residues 140-160 are Extracellular-facing; sequence TKEIIANFLDLTVPESNKHEP. A helical membrane pass occupies residues 161 to 181; that stretch reads GGAIYIGFISAMLLFISGMIF. Residues 182-219 lie on the Cytoplasmic side of the membrane; it reads CTSCIKRNPEARLDPPTQQPISNTQLENNSTHNLKDYV. Residues 193–219 form a disordered region; that stretch reads RLDPPTQQPISNTQLENNSTHNLKDYV. Positions 200-213 are enriched in polar residues; that stretch reads QPISNTQLENNSTH.

This sequence belongs to the claudin family.

Its subcellular location is the cell junction. The protein localises to the tight junction. It localises to the cell membrane. Functionally, plays a major role in tight junction-specific obliteration of the intercellular space, through calcium-independent cell-adhesion activity. The chain is Claudin-20 (CLDN20) from Homo sapiens (Human).